Here is a 373-residue protein sequence, read N- to C-terminus: Chloroperoxidase (373 aa).

The first 20 residues, 1-20 (MFSKVLPFVGAVAALPHSVR), serve as a signal peptide directing secretion. The residue at position 21 (Gln21) is a Pyrrolidone carboxylic acid. Asn33 carries an N-linked (GlcNAc...) asparagine glycan. Cys50 is a heme binding site. Cysteines 100 and 108 form a disulfide. N-linked (GlcNAc...) asparagine glycosylation is present at Asn114. Mn(2+) contacts are provided by Glu125, His126, and Ser129. Residue Glu204 is part of the active site. N-linked (GlcNAc...) asparagine glycosylation is present at Asn237. Thr259 is a glycosylation site (O-linked (Man) threonine). Residues Ser260, Ser262, Ser263, and Ser269 are each glycosylated (O-linked (Man) serine). Residue Thr271 is glycosylated (O-linked (Man) threonine). Ser272 carries O-linked (Man) serine glycosylation. A glycan (O-linked (Man) threonine) is linked at Thr273. O-linked (Man...) threonine glycosylation is found at Thr296, Thr304, and Thr314. The propeptide occupies 322–373 (EAAPAATTSMAVFKNPYLEAIGTQDIKNQQAYVSSKAAAMASAMAANKARNL).

This sequence belongs to the chloroperoxidase family. Heme b is required as a cofactor. The cofactor is Mn(2+). N- and O-glycosylated.

It catalyses the reaction RH + Cl(-) + H2O2 = RCl + 2 H2O.. Catalyzes peroxidative halogenations involved in the biosynthesis of clardariomycin (2,2-dichloro-1,3-cyclo-pentenedione). The enzyme also has potent catalase activity and in the absence of halide ion, acts as a peroxidase similar to plant peroxidases. The polypeptide is Chloroperoxidase (CPO) (Leptoxyphium fumago (Caldariomyces fumago)).